The chain runs to 162 residues: NADH-quinone oxidoreductase subunit I (162 aa).

2 consecutive 4Fe-4S ferredoxin-type domains span residues leucine 53–aspartate 83 and threonine 93–isoleucine 122. [4Fe-4S] cluster-binding residues include cysteine 63, cysteine 66, cysteine 69, cysteine 73, cysteine 102, cysteine 105, cysteine 108, and cysteine 112.

The protein belongs to the complex I 23 kDa subunit family. NDH-1 is composed of 14 different subunits. Subunits NuoA, H, J, K, L, M, N constitute the membrane sector of the complex. Requires [4Fe-4S] cluster as cofactor.

Its subcellular location is the cell inner membrane. The enzyme catalyses a quinone + NADH + 5 H(+)(in) = a quinol + NAD(+) + 4 H(+)(out). Functionally, NDH-1 shuttles electrons from NADH, via FMN and iron-sulfur (Fe-S) centers, to quinones in the respiratory chain. The immediate electron acceptor for the enzyme in this species is believed to be ubiquinone. Couples the redox reaction to proton translocation (for every two electrons transferred, four hydrogen ions are translocated across the cytoplasmic membrane), and thus conserves the redox energy in a proton gradient. This chain is NADH-quinone oxidoreductase subunit I, found in Bordetella avium (strain 197N).